The following is a 239-amino-acid chain: uncharacterized protein (239 aa).

The signal sequence occupies residues 1-23 (MKTMVAMLLAAVGVAVSASSTLA). The segment covering 220–230 (AHPKQTLRDQR) has biased composition (basic and acidic residues). The interval 220–239 (AHPKQTLRDQRPAGGDEITK) is disordered.

This is an uncharacterized protein from Sinorhizobium fredii (strain NBRC 101917 / NGR234).